The following is a 261-amino-acid chain: Fructoselysine 6-kinase (261 aa).

This sequence belongs to the carbohydrate kinase PfkB family. Monomer.

It carries out the reaction N(6)-(D-fructosyl)-L-lysine + ATP = N(6)-(6-phospho-D-fructosyl)-L-lysine + ADP + H(+). Its pathway is carbohydrate metabolism; fructoselysine degradation; D-glucose 6-phosphate and lysine from fructoselysine: step 1/2. Functionally, catalyzes the ATP-dependent phosphorylation of fructoselysine to fructoselysine 6-phosphate. Functions in a fructoselysine degradation pathway that allows E.coli to grow on fructoselysine or psicoselysine. To a much lesser extenst, is also able to phosphorylate psicoselysine. The sequence is that of Fructoselysine 6-kinase from Escherichia coli (strain K12).